Consider the following 456-residue polypeptide: Glutathione reductase (456 aa).

Positions 14, 15, 34, 41, 42, and 50 each coordinate FAD. Ser14 contributes to the glutathione binding site. A disulfide bridge links Cys42 with Cys47. Tyr99 lines the glutathione pocket. Gly115 serves as a coordination point for FAD. NADP(+)-binding residues include Ala180, Ile183, Glu186, Arg203, Arg209, and Gly267. An FAD-binding site is contributed by Asp308. Glu315 contributes to the NADP(+) binding site. Thr317 contributes to the FAD binding site. Arg325 contributes to the glutathione binding site. Val348 is an NADP(+) binding site. His445 contacts FAD. Catalysis depends on His445, which acts as the Proton acceptor.

It belongs to the class-I pyridine nucleotide-disulfide oxidoreductase family. In terms of assembly, homodimer. Requires FAD as cofactor.

Its subcellular location is the cytoplasm. It carries out the reaction 2 glutathione + NADP(+) = glutathione disulfide + NADPH + H(+). Functionally, catalyzes the reduction of glutathione disulfide (GSSG) to reduced glutathione (GSH). Constitutes the major mechanism to maintain a high GSH:GSSG ratio in the cytosol. This chain is Glutathione reductase (gor), found in Haemophilus influenzae (strain ATCC 51907 / DSM 11121 / KW20 / Rd).